The sequence spans 198 residues: HTH-type transcriptional regulator BetI (198 aa).

Residues 8–68 enclose the HTH tetR-type domain; sequence PLRRRELIDA…ATMRHLLREL (61 aa). Positions 31 to 50 form a DNA-binding region, H-T-H motif; that stretch reads TVAQIAHEAGVSPALAHHYF.

It participates in amine and polyamine biosynthesis; betaine biosynthesis via choline pathway [regulation]. Its function is as follows. Repressor involved in the biosynthesis of the osmoprotectant glycine betaine. It represses transcription of the choline transporter BetT and the genes of BetAB involved in the synthesis of glycine betaine. In Brucella suis biovar 1 (strain 1330), this protein is HTH-type transcriptional regulator BetI.